The primary structure comprises 358 residues: Neutral protease 2 homolog PABG_02362 (358 aa).

The N-terminal stretch at 1-19 is a signal peptide; sequence MRRVSGILAVAAFTISAFA. Positions 20–182 are excised as a propeptide; sequence GVIQPVAKDA…FAAMNQFVKI (163 aa). Intrachain disulfides connect Cys-188–Cys-259 and Cys-266–Cys-284. Asn-249 is a glycosylation site (N-linked (GlcNAc...) asparagine). His-309 is a Zn(2+) binding site. The active site involves Glu-310. The Zn(2+) site is built by His-313 and Asp-324.

It belongs to the peptidase M35 family. Zn(2+) serves as cofactor.

The protein resides in the secreted. It catalyses the reaction Preferential cleavage of bonds with hydrophobic residues in P1'. Also 3-Asn-|-Gln-4 and 8-Gly-|-Ser-9 bonds in insulin B chain.. Secreted metalloproteinase that allows assimilation of proteinaceous substrates. Shows high activities on basic nuclear substrates such as histone and protamine. The protein is Neutral protease 2 homolog PABG_02362 of Paracoccidioides brasiliensis (strain Pb03).